Consider the following 397-residue polypeptide: Ubiquitin-like modifier-activating enzyme 5 (397 aa).

ATP is bound by residues glycine 76, aspartate 97, lysine 120, asparagine 143, and asparagine 177. Positions 219 and 222 each coordinate Zn(2+). Cysteine 243 (glycyl thioester intermediate) is an active-site residue. Cysteine 296 and cysteine 301 together coordinate Zn(2+). Residues 343-384 (PSDAPTDLSQSTDVGQGLRLAYEAPEKSSAEATQAATAPVDD) form a disordered region.

Belongs to the ubiquitin-activating E1 family. UBA5 subfamily.

In terms of biological role, E1-like enzyme which activates UFM1. This Drosophila pseudoobscura pseudoobscura (Fruit fly) protein is Ubiquitin-like modifier-activating enzyme 5.